The primary structure comprises 798 residues: Copalyl diphosphate synthase 1, chloroplastic (798 aa).

A chloroplast-targeting transit peptide spans 1–72 (MASLSTMHLI…SKVAGINRVA (72 aa)). Lys-251 serves as a coordination point for substrate. 2 residues coordinate Mg(2+): Asp-383 and Asp-385. The DXDD motif motif lies at 383-386 (DIDD). Residue Lys-469 participates in substrate binding.

The protein belongs to the terpene synthase family. Tpsc subfamily. Mg(2+) serves as cofactor. In terms of tissue distribution, highly expressed in roots, and, at low levels, in stems and leaves.

The protein localises to the plastid. It is found in the chloroplast. It catalyses the reaction (2E,6E,10E)-geranylgeranyl diphosphate = (+)-copalyl diphosphate. It participates in secondary metabolite biosynthesis; terpenoid biosynthesis. Its function is as follows. Involved in the biosynthesis of ent-kaurene diterpenoids natural products such as oridonin, miltiradiene, eriocalyxin B and nezukol, known to exhibit antitumor, anti-inflammatory and antibacterial activities. Catalyzes the conversion of (2E,6E,10E)-geranylgeranyl diphosphate (GGPP) to (+)-copalyl diphosphate ((+)-CPP). This is Copalyl diphosphate synthase 1, chloroplastic from Isodon rubescens (Rabdosia rubescens).